Here is a 38-residue protein sequence, read N- to C-terminus: Large ribosomal subunit protein bL36 (38 aa).

It belongs to the bacterial ribosomal protein bL36 family.

The protein is Large ribosomal subunit protein bL36 of Acholeplasma laidlawii (strain PG-8A).